The sequence spans 301 residues: MTRMAEKPISPTKTRTRFEDIQAHYDVSDDFFALFQDPTRTYSCAYFEPPELTLEEAQYAKVDLNLDKLDLKPGMTLLDIGCGWGTTMRRAVERFDVNVIGLTLSKNQHARCEQVLASIDTNRSRQVLLQGWEDFAEPVDRIVSIEAFEHFGHENYDDFFKRCFNIMPADGRMTVQSSVSYHPYEMAARGKKLSFETARFIKFIVTEIFPGGRLPSTEMMVEHGEKAGFTVPEPLSLRPHYIKTLRIWGDTLQSNKDKAIEVTSEEVYNRYMKYLRGCEHYFTDEMLDCSLVTYLKPGAAA.

S-adenosyl-L-methionine-binding positions include Y42–S43, G81–G83, T103–Q108, W132–E133, and I145. C278 is an active-site residue.

The protein belongs to the CFA/CMAS family. Monomer.

It participates in lipid metabolism; mycolic acid biosynthesis. Inhibited by S-adenosyl-N-decyl-aminoethyl (SADAE). Functionally, involved in the biosynthesis of hydroxymycolate, a common precursor of oxygenated mycolic acids (methoxy-mycolate and keto-mycolate). Probably transfers a methyl group from the S-adenosylmethionine (SAM) cofactor and, subsequently or simultaneously, a water molecule onto the double bound of ethylene substrates, leading to the formation of the hydroxylated product at the distal position. Involved in the activation of the antitubercular drug thiacetazone (TAC). This chain is Hydroxymycolate synthase MmaA4 (mmaA4), found in Mycobacterium tuberculosis (strain ATCC 25618 / H37Rv).